The chain runs to 329 residues: uncharacterized protein (329 aa).

A run of 9 helical transmembrane segments spans residues 5–24 (NLLLLILLHIGAFLFPFLTV), 34–56 (IAVALALLAVVLMSEALSIYLIF), 92–114 (FGYIIIGFPAAGLMLCGAVLEWG), 124–146 (IIFFAFIVPLLQLCLFPLVVLFY), 159–181 (SANFSVFWAKLSIAGLVLVLLSL), 196–218 (TAHRTAFILAPLFNIFVGALQYL), 231–253 (FSIVLFASPLLSFALLLELLGAY), 263–285 (LIGVSVIFLAMFAATWVVLRLFG), and 306–328 (FWLFWVNAAIVGIGIFFVIRILT).

The protein localises to the cell membrane. This is an uncharacterized protein from Archaeoglobus fulgidus (strain ATCC 49558 / DSM 4304 / JCM 9628 / NBRC 100126 / VC-16).